The following is a 902-amino-acid chain: Auxin response factor 5 (902 aa).

The TF-B3 DNA-binding region spans 158-260 (FCKTLTASDT…QLMVGVRRAN (103 aa)). The disordered stretch occupies residues 497–543 (SEMVQPQNKLTVNPSASNTSGQEQNLSQSMSAPAKPENSTLSGCSSG). A PB1 domain is found at 793 to 877 (RTYTKVQKTG…RCIRILSPTE (85 aa)).

This sequence belongs to the ARF family. In terms of assembly, homodimers and heterodimers. Interacts with BRX and the auxin-responsive proteins IAA1, IAA12 (BODENLOS), IAA17 and ARF7. As to expression, expressed in the whole plant with a lower expression in leaves. Detected in embryo axis, provascular tissues, procambium and some differentiated vascular regions of mature organs.

It localises to the nucleus. Functionally, auxin response factors (ARFs) are transcriptional factors that bind specifically to the DNA sequence 5'-TGTCTC-3' found in the auxin-responsive promoter elements (AuxREs). Seems to act as transcriptional activator. Formation of heterodimers with Aux/IAA proteins may alter their ability to modulate early auxin response genes expression. Mediates embryo axis formation and vascular tissues differentiation. Functionally redundant with ARF7. May be necessary to counteract AMP1 activity. This is Auxin response factor 5 (ARF5) from Arabidopsis thaliana (Mouse-ear cress).